The chain runs to 172 residues: Translationally-controlled tumor protein homolog (172 aa).

Residues 1–172 enclose the TCTP domain; that stretch reads MIIFKDLLTG…FKHGLDEEKV (172 aa).

Belongs to the TCTP family. As to expression, expressed by the venom gland.

It localises to the secreted. Its function is as follows. Venom protein that causes edema, enhances vascular permeability and is likely related to the inflammatory activity of the venom. This Loxosceles intermedia (Brown spider) protein is Translationally-controlled tumor protein homolog.